We begin with the raw amino-acid sequence, 143 residues long: Nucleoside diphosphate kinase (143 aa).

Positions 11, 59, 87, 93, 104, and 114 each coordinate ATP. Catalysis depends on His117, which acts as the Pros-phosphohistidine intermediate.

The protein belongs to the NDK family. As to quaternary structure, homotetramer. The cofactor is Mg(2+).

It localises to the cytoplasm. The catalysed reaction is a 2'-deoxyribonucleoside 5'-diphosphate + ATP = a 2'-deoxyribonucleoside 5'-triphosphate + ADP. It catalyses the reaction a ribonucleoside 5'-diphosphate + ATP = a ribonucleoside 5'-triphosphate + ADP. In terms of biological role, major role in the synthesis of nucleoside triphosphates other than ATP. The ATP gamma phosphate is transferred to the NDP beta phosphate via a ping-pong mechanism, using a phosphorylated active-site intermediate. The polypeptide is Nucleoside diphosphate kinase (Acinetobacter baylyi (strain ATCC 33305 / BD413 / ADP1)).